A 452-amino-acid chain; its full sequence is Cysteine--tRNA ligase (452 aa).

Zn(2+) is bound at residue cysteine 35. The 'HIGH' region motif lies at 37-47 (PTVYDRAHLGN). Residues cysteine 215, histidine 240, and glutamate 244 each coordinate Zn(2+). The 'KMSKS' region motif lies at 273–277 (KMSKS). Lysine 276 is a binding site for ATP.

It belongs to the class-I aminoacyl-tRNA synthetase family. Monomer. The cofactor is Zn(2+).

It is found in the cytoplasm. It carries out the reaction tRNA(Cys) + L-cysteine + ATP = L-cysteinyl-tRNA(Cys) + AMP + diphosphate. In Gluconobacter oxydans (strain 621H) (Gluconobacter suboxydans), this protein is Cysteine--tRNA ligase.